We begin with the raw amino-acid sequence, 663 residues long: Rho GTPase-activating protein 18 (663 aa).

The interval Tyr-15–Ser-37 is disordered. Phosphoserine occurs at positions 66 and 69. Thr-158 bears the Phosphothreonine mark. Disordered regions lie at residues Arg-179–Glu-227 and Gln-243–Gly-277. 2 stretches are compositionally biased toward basic and acidic residues: residues Asn-197–Pro-219 and Glu-245–Asp-258. Ser-263 bears the Phosphoserine mark. The Rho-GAP domain maps to Val-324–Trp-523. Ser-610 is subject to Phosphoserine.

As to quaternary structure, interacts with MPHOSPH6.

The protein resides in the cytoplasm. Functionally, rho GTPase activating protein that suppresses F-actin polymerization by inhibiting Rho. Rho GTPase activating proteins act by converting Rho-type GTPases to an inactive GDP-bound state. Plays a key role in tissue tension and 3D tissue shape by regulating cortical actomyosin network formation. Acts downstream of YAP1 and inhibits actin polymerization, which in turn reduces nuclear localization of YAP1. Regulates cell shape, spreading, and migration. This Homo sapiens (Human) protein is Rho GTPase-activating protein 18.